Reading from the N-terminus, the 176-residue chain is NAD(P)H-quinone oxidoreductase subunit 6, chloroplastic (176 aa).

A run of 5 helical transmembrane segments spans residues 10-30 (FLLV…VLLT), 32-52 (PIYS…FYIL), 61-81 (AQLL…VMFM), 92-112 (LWTL…LSLI), and 152-172 (FFLP…GAIA).

The protein belongs to the complex I subunit 6 family. In terms of assembly, NDH is composed of at least 16 different subunits, 5 of which are encoded in the nucleus.

The protein localises to the plastid. Its subcellular location is the chloroplast thylakoid membrane. It carries out the reaction a plastoquinone + NADH + (n+1) H(+)(in) = a plastoquinol + NAD(+) + n H(+)(out). The enzyme catalyses a plastoquinone + NADPH + (n+1) H(+)(in) = a plastoquinol + NADP(+) + n H(+)(out). Its function is as follows. NDH shuttles electrons from NAD(P)H:plastoquinone, via FMN and iron-sulfur (Fe-S) centers, to quinones in the photosynthetic chain and possibly in a chloroplast respiratory chain. The immediate electron acceptor for the enzyme in this species is believed to be plastoquinone. Couples the redox reaction to proton translocation, and thus conserves the redox energy in a proton gradient. This is NAD(P)H-quinone oxidoreductase subunit 6, chloroplastic (ndhG) from Pelargonium hortorum (Common geranium).